Consider the following 330-residue polypeptide: Glucosyltransferase 3 (330 aa).

A UDP-binding site is contributed by Thr-16. Positions 106 to 111 (MFSGNF) are substrate protein-binding loop. Residues Arg-179, 211 to 214 (YRPD), and 244 to 249 (SYKLGS) each bind UDP.

This sequence belongs to the Gtf3 glucosyltransferase family. As to quaternary structure, homotetramer; a dimer of dimers. Requires In vitro glycosyltransferase activity is metal-independent. as cofactor.

The protein operates within protein modification; protein glycosylation. Functionally, required for polymorphic O-glycosylation of the serine-rich repeat protein Fap1. Catalyzes the second step in glycosylation of the serine-rich repeat protein in this bacteria. Transfers glucose from UDP-glucose to the terminal GlcNAc moiety of 3-O-(N-acetyl-alpha-D-glucosaminyl)-L-seryl-[protein] which results from the first glycosylation step of Fap1; does not use other sugar nucleotides as substrates. The sequence is that of Glucosyltransferase 3 from Streptococcus parasanguinis.